Consider the following 463-residue polypeptide: Glycine--tRNA ligase (463 aa).

Residues Arg-98 and Glu-174 each coordinate substrate. ATP-binding positions include 206 to 208 (RNE), 216 to 221 (FRTREF), 290 to 291 (EL), and 334 to 337 (GADR). 221–225 (FEQME) provides a ligand contact to substrate. A substrate-binding site is contributed by 330–334 (EPSLG).

Belongs to the class-II aminoacyl-tRNA synthetase family. Homodimer.

The protein localises to the cytoplasm. The enzyme catalyses tRNA(Gly) + glycine + ATP = glycyl-tRNA(Gly) + AMP + diphosphate. Functionally, catalyzes the attachment of glycine to tRNA(Gly). The protein is Glycine--tRNA ligase of Staphylococcus aureus (strain Mu50 / ATCC 700699).